We begin with the raw amino-acid sequence, 689 residues long: Beta-adrenergic receptor kinase 1 (689 aa).

The tract at residues 1 to 190 is N-terminal; it reads MADLEAVLAD…ELNIHLTMND (190 aa). The RGS domain occupies 54–175; the sequence is TFEKIFSQKL…IESDKFTRFC (122 aa). One can recognise a Protein kinase domain in the interval 191-453; sequence FSVHRIIGRG…AQEVKESPFF (263 aa). Residues 197 to 205 and K220 contribute to the ATP site; that span reads IGRGGFGEV. Catalysis depends on D317, which acts as the Proton acceptor. An AGC-kinase C-terminal domain is found at 454–521; that stretch reads RSLDWQMVFL…TISERWQQEV (68 aa). Residues 558–652 enclose the PH domain; that stretch reads DCIMHGYMSK…WKKELRDAYR (95 aa). S670 bears the Phosphoserine mark.

It belongs to the protein kinase superfamily. AGC Ser/Thr protein kinase family. GPRK subfamily. Interacts with the heterodimer formed by GNB1 and GNG2. Interacts with GIT1. Interacts with, and phosphorylates chemokine-stimulated CCR5. Interacts with ARRB1. Interacts with LPAR1 and LPAR2. Interacts with RALA in response to LPAR1 activation. ADRBK1 and RALA mutually inhibit each other's binding to LPAR1. Interacts with ADRB2.

It localises to the cytoplasm. The protein localises to the cell membrane. The protein resides in the postsynapse. It is found in the presynapse. The catalysed reaction is [beta-adrenergic receptor] + ATP = [beta-adrenergic receptor]-phosphate + ADP + H(+). With respect to regulation, in contrast to other AGC family kinases, the catalytic activity is solely regulated by the binding of substrates and ligands, not by phosphorylation of the kinase domain. Specifically phosphorylates the agonist-occupied form of the beta-adrenergic and closely related receptors, probably inducing a desensitization of them. Key regulator of LPAR1 signaling. Competes with RALA for binding to LPAR1 thus affecting the signaling properties of the receptor. Desensitizes LPAR1 and LPAR2 in a phosphorylation-independent manner. Positively regulates ciliary smoothened (SMO)-dependent Hedgehog (Hh) signaling pathway by facilitating the trafficking of SMO into the cilium and the stimulation of SMO activity. Inhibits relaxation of airway smooth muscle in response to blue light. In Mesocricetus auratus (Golden hamster), this protein is Beta-adrenergic receptor kinase 1.